Consider the following 348-residue polypeptide: Oxidase ucsJ (348 aa).

This sequence belongs to the avfA family.

It participates in mycotoxin biosynthesis. In terms of biological role, oxidase; part of the gene cluster that mediates the biosynthesis of UCS1025A, a member of the pyrrolizidinone family that acts as a strong telomerase inhibitor and displays potent antibacterial and antitumor properties. These compounds share a hemiaminal-containing pyrrolizidinone core fused with a gamma-lactone, giving a furopyrrolizidine that is connected to a decalin fragment. The polyketide synthase module (PKS) of the PKS-NRPS ucsA is responsible for the synthesis of the polyketide backbone via the condensation of an acetyl-CoA starter unit with 6 malonyl-CoA units. The downstream nonribosomal peptide synthetase (NRPS) module then amidates the carboxyl end of the polyketide with a 2S,3S-methylproline derived from L-isoleucine by the 2-oxoglutarate-dependent dioxygenase ucsF which converts L-isoleucine to (4S,5S)-4-methylpyrroline-5-carboxylate that is further converted to 2S,3S-methylproline by the pyrroline-5-carboxylate reductase ucsG. Reductive release of the completed aminoacyl polyketide from the assembly line can form the 3-pyrrolin-2-one structure via an intramolecular Knoevenagel reaction. Because ucsA lacks a designated enoylreductase (ER) domain, the required activity is provided the enoyl reductase ucsL. This keto acyclic precursor is the substrate of the Diels-Alderase ucsH, that catalyzes the Diels-Alder cycloaddition. Oxidation of the 3S-methyl group to a carboxylate by the cytochrome P450 monooxygenase ucsK allows an oxa-Michael cyclization that might involve the reductase/dehydrogenase ucsI and which furnishes the furopyrrolizidine. The oxidase ucsJ likely plays a critical role in stereoselective reduction of the C5-C6 double bond to afford the required R-configured carboxylate group. Further enolization and oxidation at C5 by an unidentified enzyme affords the last intermediate that can undergo oxa-Michael cyclization to yield UCS1025A. The chain is Oxidase ucsJ from Acremonium sp.